Consider the following 258-residue polypeptide: Adenylate kinase (258 aa).

52-57 serves as a coordination point for ATP; sequence GAGKGT. The interval 72–101 is NMP; sequence ATGDMLRSQVAKKTALGKEAKKIMDQGGLV. AMP-binding positions include Thr73, Arg78, 99-101, 128-131, and Gln135; these read GLV and GFPR. The LID stretch occupies residues 169–206; the sequence is GRLVHPASGRSYHKIFNPPKEEMKDDVTGEPLIQRSDD. ATP contacts are provided by residues Arg170 and 179–180; that span reads SY. Arg203 and Arg214 together coordinate AMP. An ATP-binding site is contributed by Gln242.

Belongs to the adenylate kinase family. AK2 subfamily. Monomer.

The protein localises to the cytoplasm. It is found in the cytosol. Its subcellular location is the mitochondrion intermembrane space. The enzyme catalyses AMP + ATP = 2 ADP. Its function is as follows. Catalyzes the reversible transfer of the terminal phosphate group between ATP and AMP. Plays an important role in cellular energy homeostasis and in adenine nucleotide metabolism. Adenylate kinase activity is critical for regulation of the phosphate utilization and the AMP de novo biosynthesis pathways. This Aspergillus niger (strain ATCC MYA-4892 / CBS 513.88 / FGSC A1513) protein is Adenylate kinase (adk1).